A 179-amino-acid polypeptide reads, in one-letter code: Cell division protein ZapC (179 aa).

It belongs to the ZapC family. As to quaternary structure, interacts directly with FtsZ.

It is found in the cytoplasm. Contributes to the efficiency of the cell division process by stabilizing the polymeric form of the cell division protein FtsZ. Acts by promoting interactions between FtsZ protofilaments and suppressing the GTPase activity of FtsZ. The chain is Cell division protein ZapC from Photobacterium profundum (strain SS9).